The sequence spans 149 residues: Calmodulin (149 aa).

Ala-2 is subject to N-acetylalanine. 4 consecutive EF-hand domains span residues 8–43, 44–79, 81–116, and 117–149; these read EQIA…LGQN, PTEA…KMKD, DSEE…LGEK, and LTDE…MTAK. Positions 21, 23, 25, 27, 32, 57, 59, 61, 63, 68, 94, 96, 98, 100, and 105 each coordinate Ca(2+). Lys-116 carries the post-translational modification N6,N6,N6-trimethyllysine. Ca(2+) contacts are provided by Asp-130, Asp-132, Asp-134, Gln-136, and Glu-141.

The protein belongs to the calmodulin family.

Calmodulin acts as part of a calcium signal transduction pathway by mediating the control of a large number of enzymes, ion channels, aquaporins and other proteins through calcium-binding. Calcium-binding is required for the activation of calmodulin. Among the enzymes to be stimulated by the calmodulin-calcium complex are a number of protein kinases, such as myosin light-chain kinases and calmodulin-dependent protein kinase type II (CaMK2), and phosphatases. The polypeptide is Calmodulin (calm) (Epinephelus akaara (Hong Kong grouper)).